Here is an 84-residue protein sequence, read N- to C-terminus: U-scoloptoxin(10)-Er1a (84 aa).

The signal sequence occupies residues 1 to 24; it reads MSRFCLLFVAFGFVLYFLHMEVTG.

This sequence belongs to the scoloptoxin-10 family. In terms of processing, contains 3 disulfide bonds. In terms of tissue distribution, expressed by the venom gland.

The protein resides in the secreted. The polypeptide is U-scoloptoxin(10)-Er1a (Ethmostigmus rubripes (Giant centipede)).